Here is a 488-residue protein sequence, read N- to C-terminus: Dipeptide and tripeptide permease A (488 aa).

Residues Met1–Arg35 lie on the Cytoplasmic side of the membrane. The helical transmembrane segment at Phe36–Ser56 threads the bilayer. The Periplasmic portion of the chain corresponds to Glu57–Ala60. The helical transmembrane segment at Ile61–Leu81 threads the bilayer. At Gly82–Arg90 the chain is on the cytoplasmic side. A helical transmembrane segment spans residues Val91 to His111. Topologically, residues Asp112–Asp114 are periplasmic. The chain crosses the membrane as a helical span at residues Met115–Ser135. Residues Ser136 to Thr154 are Cytoplasmic-facing. Residues Met155–Ala175 form a helical membrane-spanning segment. Topologically, residues Ala176–Gly179 are periplasmic. Residues Trp180–Leu200 traverse the membrane as a helical segment. Over Cys201–Tyr219 the chain is Cytoplasmic. Residues Leu220–Leu240 form a helical membrane-spanning segment. His241 is a topological domain (periplasmic). The chain crosses the membrane as a helical span at residues Asn242 to Ala262. Topologically, residues Arg263–Lys275 are cytoplasmic. The helical transmembrane segment at Met276–Met296 threads the bilayer. Residues Pro297–Ser324 are Periplasmic-facing. A helical transmembrane segment spans residues Leu325–Gly345. Residues Asp346–Lys353 lie on the Cytoplasmic side of the membrane. A helical membrane pass occupies residues Phe354 to Met374. At Ala375 to Gly391 the chain is on the periplasmic side. The helical transmembrane segment at Phe392–Val412 threads the bilayer. The Cytoplasmic portion of the chain corresponds to Pro413 to Arg415. Residues Leu416–Gly436 traverse the membrane as a helical segment. The Periplasmic segment spans residues Lys437–Ser460. Residues Val461–Pro481 form a helical membrane-spanning segment. Over Met482–Gln488 the chain is Cytoplasmic.

The protein belongs to the major facilitator superfamily. Proton-dependent oligopeptide transporter (POT/PTR) (TC 2.A.17) family. DtpA subfamily.

It is found in the cell inner membrane. Functionally, proton-dependent permease that transports di- and tripeptides. This is Dipeptide and tripeptide permease A from Proteus mirabilis (strain HI4320).